The following is a 428-amino-acid chain: Trigger factor (428 aa).

In terms of domain architecture, PPIase FKBP-type spans 163-248 (GDTAVIDFEG…VHEIKEKRLP (86 aa)).

Belongs to the FKBP-type PPIase family. Tig subfamily.

The protein localises to the cytoplasm. It catalyses the reaction [protein]-peptidylproline (omega=180) = [protein]-peptidylproline (omega=0). Its function is as follows. Involved in protein export. Acts as a chaperone by maintaining the newly synthesized protein in an open conformation. Functions as a peptidyl-prolyl cis-trans isomerase. This chain is Trigger factor, found in Geobacillus sp. (strain WCH70).